A 584-amino-acid polypeptide reads, in one-letter code: Arginine--tRNA ligase (584 aa).

A 'HIGH' region motif is present at residues 126–136 (PNIAKEMHVGH).

It belongs to the class-I aminoacyl-tRNA synthetase family. In terms of assembly, monomer.

It localises to the cytoplasm. The catalysed reaction is tRNA(Arg) + L-arginine + ATP = L-arginyl-tRNA(Arg) + AMP + diphosphate. The polypeptide is Arginine--tRNA ligase (Nostoc punctiforme (strain ATCC 29133 / PCC 73102)).